The chain runs to 162 residues: Small ribosomal subunit protein uS7m (162 aa).

Belongs to the universal ribosomal protein uS7 family. Part of the small ribosomal subunit.

It is found in the mitochondrion. One of the primary rRNA binding proteins, it binds directly to 16S-like rRNA where it nucleates assembly of the head domain of the small subunit. The protein is Small ribosomal subunit protein uS7m (mrps7) of Dictyostelium discoideum (Social amoeba).